We begin with the raw amino-acid sequence, 88 residues long: MSRSLRKGPFVDHHLIKKVRAMNLLEKKSPIKTWSRRSMITPEMIGHTFEVHNGKKFLTVFVSETMVGHKLGEFSPTRIFKSHPVKKG.

The protein belongs to the universal ribosomal protein uS19 family.

Its function is as follows. Protein S19 forms a complex with S13 that binds strongly to the 16S ribosomal RNA. The protein is Small ribosomal subunit protein uS19 of Chlamydia caviae (strain ATCC VR-813 / DSM 19441 / 03DC25 / GPIC) (Chlamydophila caviae).